Consider the following 309-residue polypeptide: MANSLYQKHIISIAELSRAELELIVKTAGQLKAQPNPELIKHKVVASCFFEPSTRTRLSFETAIQRIGGSVIGFDNGGNTSLAKKGETLADSVRVISSYVDAFVMRHPQEGAARLASEFSNGIPVINAGDGSNQHPSQTLLDLYSIFETQGRLDNLDVAFVGDLKYGRTVHSLAQALAKFDNNRFYFVAPEALAMPDYICEELDEAGVKYQVFSDMESVIPELDILYMTRVQKERFDESEYAHIKSAYILTAAHLSDARSNLKVLHPLPRVDEITTDVDKTPHAYYFEQVENGVYAREALLALVLNESL.

Carbamoyl phosphate contacts are provided by Arg55 and Thr56. Lys85 contacts L-aspartate. Positions 106, 135, and 138 each coordinate carbamoyl phosphate. Residues Arg168 and Arg230 each contribute to the L-aspartate site. Carbamoyl phosphate is bound by residues Leu268 and Pro269.

The protein belongs to the aspartate/ornithine carbamoyltransferase superfamily. ATCase family. Heterododecamer (2C3:3R2) of six catalytic PyrB chains organized as two trimers (C3), and six regulatory PyrI chains organized as three dimers (R2).

It carries out the reaction carbamoyl phosphate + L-aspartate = N-carbamoyl-L-aspartate + phosphate + H(+). It functions in the pathway pyrimidine metabolism; UMP biosynthesis via de novo pathway; (S)-dihydroorotate from bicarbonate: step 2/3. In terms of biological role, catalyzes the condensation of carbamoyl phosphate and aspartate to form carbamoyl aspartate and inorganic phosphate, the committed step in the de novo pyrimidine nucleotide biosynthesis pathway. This chain is Aspartate carbamoyltransferase catalytic subunit, found in Vibrio cholerae serotype O1 (strain ATCC 39541 / Classical Ogawa 395 / O395).